A 466-amino-acid polypeptide reads, in one-letter code: MGNYSRRRFLQGSLAIVAGNVLPCAAMAADNPPLWIPPLTSVGRGSPILLNARNVKKAFDNNKVDAWGFNGSYLGPTIKMKQNDFLRLTYRNNLSEAIAINIQGLQANGEVSGSINRNLAPNSSWSPIIQIKQSASTCWYHSDTIGRSAYQSYRGLIGMWIIEDEESKKNLLPNKYGENDIPLILQDISLNYDGQQVFNLEKNSFLGKQLFVNGQRNPFINVARGFIRLRLLNASVSRPYYLHLDNQQPFFKIASGLGFLPQPLEQKVLLLAPGERAEILVNTNQNKPLRLLAGDSANIIDKVRGWLGMSDHLQNNLVVELRPQGLASAFAQQKPTLPDAKLGLPLSPQKERHIHLSTQDAMINQRRFDPRRIDIFAQLNSVERWVLTADQATGFQLQGAKFLIEQQNGERNKKEMLAWTDTVWVEGETRILVQFDNPSSNSYPFIFGASNLLLADKGCMGLLVVQ.

Residues 1–28 constitute a signal peptide (tat-type signal); that stretch reads MGNYSRRRFLQGSLAIVAGNVLPCAAMA.

It belongs to the FtsP family. Post-translationally, predicted to be exported by the Tat system. The position of the signal peptide cleavage has not been experimentally proven.

The protein localises to the periplasm. In terms of biological role, cell division protein that is required for growth during stress conditions. May be involved in protecting or stabilizing the divisomal assembly under conditions of stress. In Gallibacterium anatis (strain UMN179) (Pasteurella anatis), this protein is Cell division protein FtsP.